The chain runs to 376 residues: MTVSKFVQIRRDLHRIPEIGFKEWETQQYILDYIGTLSLEFVEVKTWKTGVIVKVNGKNPEKIIGYRADIDGLPITEETGYEFASIHEGMMHACGHDVHTTIGLGLLTKAVSERIDDDLVFLFQPAEEGPGGALPMLESEELKEWKPNIILGLHIAPEYAVGTIATKEGLLFANTSELYIDLKGKGGHAAYPHTANDMIVAASHLVTQLQSVISRNVNPLDSAVITIGKITGGTVQNIIAEKSRLEGTIRTLSVESMKRVKSRIEAIVAGIEASFQCEAIIDYGAMYHQVYNHEELTREFMQFVHKQTDMNVITCTEAMTGEDFGYMLREIPGFMFWLGVNSEYGLHHAKLKPDEEVIEKAITFLSQYVKWKGNRK.

The active site involves Asp-69. Glu-128 acts as the Proton acceptor in catalysis.

This sequence belongs to the peptidase M20A family. N-acetyldiaminopimelate deacetylase subfamily.

The enzyme catalyses N-acetyl-(2S,6S)-2,6-diaminopimelate + H2O = (2S,6S)-2,6-diaminopimelate + acetate. It functions in the pathway amino-acid biosynthesis; L-lysine biosynthesis via DAP pathway; LL-2,6-diaminopimelate from (S)-tetrahydrodipicolinate (acetylase route): step 3/3. Catalyzes the conversion of N-acetyl-diaminopimelate to diaminopimelate and acetate. This is N-acetyldiaminopimelate deacetylase from Bacillus cereus (strain G9842).